A 306-amino-acid chain; its full sequence is Bifunctional protein FolD 1 (306 aa).

Residues 170 to 172, Thr-199, and Val-240 contribute to the NADP(+) site; that span reads GRG. Residues 285–306 form a disordered region; that stretch reads ARRTRSSRTPVRLPDSGAPAGR.

This sequence belongs to the tetrahydrofolate dehydrogenase/cyclohydrolase family. In terms of assembly, homodimer.

It carries out the reaction (6R)-5,10-methylene-5,6,7,8-tetrahydrofolate + NADP(+) = (6R)-5,10-methenyltetrahydrofolate + NADPH. The catalysed reaction is (6R)-5,10-methenyltetrahydrofolate + H2O = (6R)-10-formyltetrahydrofolate + H(+). It participates in one-carbon metabolism; tetrahydrofolate interconversion. In terms of biological role, catalyzes the oxidation of 5,10-methylenetetrahydrofolate to 5,10-methenyltetrahydrofolate and then the hydrolysis of 5,10-methenyltetrahydrofolate to 10-formyltetrahydrofolate. The sequence is that of Bifunctional protein FolD 1 from Salinispora tropica (strain ATCC BAA-916 / DSM 44818 / JCM 13857 / NBRC 105044 / CNB-440).